A 469-amino-acid chain; its full sequence is Transcription factor phomD' (469 aa).

The segment at residues 14–41 (CNACNESKVRCSQRKPTCARCERNGVEC) is a DNA-binding region (zn(2)-C6 fungal-type). The interval 49–118 (THKDAPPISM…QQKDEAAAAA (70 aa)) is disordered. Residues 82 to 93 (KANSNSSSNWHM) show a composition bias toward polar residues. Positions 104–118 (QQQQQQQKDEAAAAA) are enriched in low complexity.

The protein resides in the nucleus. In terms of biological role, transcription factor; part of the gene cluster that mediates the biosynthesis of the phomopsins, a group of hexapeptide mycotoxins which infects lupins and causes lupinosis disease in livestock. May play a role in the regulation of the production of phomopsins. In Diaporthe leptostromiformis (Lupinosis disease fungus), this protein is Transcription factor phomD'.